Here is a 372-residue protein sequence, read N- to C-terminus: Beta sliding clamp (372 aa).

The protein belongs to the beta sliding clamp family. As to quaternary structure, forms a ring-shaped head-to-tail homodimer around DNA which binds and tethers DNA polymerases and other proteins to the DNA. The DNA replisome complex has a single clamp-loading complex (3 tau and 1 each of delta, delta', psi and chi subunits) which binds 3 Pol III cores (1 core on the leading strand and 2 on the lagging strand) each with a beta sliding clamp dimer. Additional proteins in the replisome are other copies of gamma, psi and chi, Ssb, DNA helicase and RNA primase.

It localises to the cytoplasm. Functionally, confers DNA tethering and processivity to DNA polymerases and other proteins. Acts as a clamp, forming a ring around DNA (a reaction catalyzed by the clamp-loading complex) which diffuses in an ATP-independent manner freely and bidirectionally along dsDNA. Initially characterized for its ability to contact the catalytic subunit of DNA polymerase III (Pol III), a complex, multichain enzyme responsible for most of the replicative synthesis in bacteria; Pol III exhibits 3'-5' exonuclease proofreading activity. The beta chain is required for initiation of replication as well as for processivity of DNA replication. This Caulobacter vibrioides (strain ATCC 19089 / CIP 103742 / CB 15) (Caulobacter crescentus) protein is Beta sliding clamp (dnaN).